A 104-amino-acid polypeptide reads, in one-letter code: Large ribosomal subunit protein uL24 (104 aa).

Belongs to the universal ribosomal protein uL24 family. As to quaternary structure, part of the 50S ribosomal subunit.

One of two assembly initiator proteins, it binds directly to the 5'-end of the 23S rRNA, where it nucleates assembly of the 50S subunit. Its function is as follows. One of the proteins that surrounds the polypeptide exit tunnel on the outside of the subunit. The polypeptide is Large ribosomal subunit protein uL24 (Bartonella henselae (strain ATCC 49882 / DSM 28221 / CCUG 30454 / Houston 1) (Rochalimaea henselae)).